The sequence spans 212 residues: Phosphatidylserine decarboxylase proenzyme (212 aa).

Serine 182 (schiff-base intermediate with substrate; via pyruvic acid) is an active-site residue. Serine 182 carries the pyruvic acid (Ser); by autocatalysis modification.

The protein belongs to the phosphatidylserine decarboxylase family. PSD-A subfamily. As to quaternary structure, heterodimer of a large membrane-associated beta subunit and a small pyruvoyl-containing alpha subunit. Pyruvate serves as cofactor. Post-translationally, is synthesized initially as an inactive proenzyme. Formation of the active enzyme involves a self-maturation process in which the active site pyruvoyl group is generated from an internal serine residue via an autocatalytic post-translational modification. Two non-identical subunits are generated from the proenzyme in this reaction, and the pyruvate is formed at the N-terminus of the alpha chain, which is derived from the carboxyl end of the proenzyme. The post-translation cleavage follows an unusual pathway, termed non-hydrolytic serinolysis, in which the side chain hydroxyl group of the serine supplies its oxygen atom to form the C-terminus of the beta chain, while the remainder of the serine residue undergoes an oxidative deamination to produce ammonia and the pyruvoyl prosthetic group on the alpha chain.

It localises to the cell membrane. The enzyme catalyses a 1,2-diacyl-sn-glycero-3-phospho-L-serine + H(+) = a 1,2-diacyl-sn-glycero-3-phosphoethanolamine + CO2. It participates in phospholipid metabolism; phosphatidylethanolamine biosynthesis; phosphatidylethanolamine from CDP-diacylglycerol: step 2/2. Its function is as follows. Catalyzes the formation of phosphatidylethanolamine (PtdEtn) from phosphatidylserine (PtdSer). The sequence is that of Phosphatidylserine decarboxylase proenzyme from Pelodictyon phaeoclathratiforme (strain DSM 5477 / BU-1).